The chain runs to 247 residues: ATP synthase subunit a, chloroplastic (247 aa).

5 consecutive transmembrane segments (helical) span residues 38–58, 95–115, 134–154, 199–219, and 220–240; these read QVLI…IIAV, VPFI…GALL, INTT…AGLS, LVVV…VMFL, and GLFT…AYIG.

It belongs to the ATPase A chain family. F-type ATPases have 2 components, CF(1) - the catalytic core - and CF(0) - the membrane proton channel. CF(1) has five subunits: alpha(3), beta(3), gamma(1), delta(1), epsilon(1). CF(0) has four main subunits: a, b, b' and c.

It localises to the plastid. The protein resides in the chloroplast thylakoid membrane. In terms of biological role, key component of the proton channel; it plays a direct role in the translocation of protons across the membrane. The protein is ATP synthase subunit a, chloroplastic of Sorghum bicolor (Sorghum).